A 568-amino-acid polypeptide reads, in one-letter code: Sphingosine-1-phosphate lyase 1 (568 aa).

At 1–40 the chain is on the lumenal side; it reads MPSTDLLMLKAFEPYLEILEVYSTKAKNYVNGHCTKYEPW. Residues 41 to 61 traverse the membrane as a helical; Signal-anchor for type III membrane protein segment; the sequence is QLIAWSVVWTLLIVWGYEFVF. Residues 62 to 568 lie on the Cytoplasmic side of the membrane; the sequence is QPESLWSRFK…SQMNGSPKPH (507 aa). An N6-(pyridoxal phosphate)lysine; alternate modification is found at lysine 353. Lysine 353 carries the post-translational modification N6-acetyllysine; alternate. Tyrosine 356 and tyrosine 366 each carry 3'-nitrotyrosine. The residue at position 564 (serine 564) is a Phosphoserine.

Belongs to the group II decarboxylase family. Sphingosine-1-phosphate lyase subfamily. Homodimer. The cofactor is pyridoxal 5'-phosphate. Ubiquitously expressed. Expressed in fetal and adult adrenal gland (at protein level).

It localises to the endoplasmic reticulum membrane. It catalyses the reaction sphinganine 1-phosphate = hexadecanal + phosphoethanolamine. The enzyme catalyses sphing-4-enine 1-phosphate = (2E)-hexadecenal + phosphoethanolamine. Its pathway is lipid metabolism; sphingolipid metabolism. In terms of biological role, cleaves phosphorylated sphingoid bases (PSBs), such as sphingosine-1-phosphate, into fatty aldehydes and phosphoethanolamine. Elevates stress-induced ceramide production and apoptosis. Required for global lipid homeostasis in liver and cholesterol homeostasis in fibroblasts. Involved in the regulation of pro-inflammatory response and neutrophil trafficking. Modulates neuronal autophagy via phosphoethanolamine production which regulates accumulation of aggregate-prone proteins such as APP. Seems to play a role in establishing neuronal contact sites and axonal maintenance. In Homo sapiens (Human), this protein is Sphingosine-1-phosphate lyase 1.